A 298-amino-acid chain; its full sequence is Proline-rich protein 32 (298 aa).

The tract at residues Cys-36–Arg-56 is disordered.

The chain is Proline-rich protein 32 (PRR32) from Homo sapiens (Human).